The sequence spans 530 residues: Lanosterol 14-alpha demethylase CYP51 (530 aa).

Over 1 to 20 (MSATKSIVGEALEYVNIGLS) the chain is Lumenal. Residues 21 to 41 (HFLALPLAQRISLIIIIPFIY) traverse the membrane as a helical segment. Residues 42–530 (NIVWQLLYSL…WEKRNPEQKI (489 aa)) lie on the Cytoplasmic side of the membrane. Lys-116 is covalently cross-linked (Glycyl lysine isopeptide (Lys-Gly) (interchain with G-Cter in ubiquitin)). Tyr-126 is a binding site for lanosterol. Residue Gly-314 participates in itraconazole binding. Glycyl lysine isopeptide (Lys-Gly) (interchain with G-Cter in ubiquitin) cross-links involve residues Lys-353 and Lys-454. Position 458 is a phosphoserine (Ser-458). Cys-470 lines the heme pocket.

This sequence belongs to the cytochrome P450 family. In terms of assembly, interacts with ERG28. It depends on heme as a cofactor.

Its subcellular location is the endoplasmic reticulum membrane. It catalyses the reaction a 14alpha-methyl steroid + 3 reduced [NADPH--hemoprotein reductase] + 3 O2 = a Delta(14) steroid + formate + 3 oxidized [NADPH--hemoprotein reductase] + 4 H2O + 4 H(+). The enzyme catalyses a 14alpha-methyl steroid + reduced [NADPH--hemoprotein reductase] + O2 = a 14alpha-hydroxymethyl steroid + oxidized [NADPH--hemoprotein reductase] + H2O + H(+). The catalysed reaction is a 14alpha-hydroxymethyl steroid + reduced [NADPH--hemoprotein reductase] + O2 = a 14alpha-formyl steroid + oxidized [NADPH--hemoprotein reductase] + 2 H2O + H(+). It carries out the reaction a 14alpha-formyl steroid + reduced [NADPH--hemoprotein reductase] + O2 = a Delta(14) steroid + formate + oxidized [NADPH--hemoprotein reductase] + H2O + 2 H(+). It catalyses the reaction lanosterol + 3 reduced [NADPH--hemoprotein reductase] + 3 O2 = 4,4-dimethyl-5alpha-cholesta-8,14,24-trien-3beta-ol + formate + 3 oxidized [NADPH--hemoprotein reductase] + 4 H2O + 4 H(+). The enzyme catalyses lanosterol + reduced [NADPH--hemoprotein reductase] + O2 = 32-hydroxylanosterol + oxidized [NADPH--hemoprotein reductase] + H2O + H(+). The catalysed reaction is 32-hydroxylanosterol + reduced [NADPH--hemoprotein reductase] + O2 = 32-oxolanosterol + oxidized [NADPH--hemoprotein reductase] + 2 H2O + H(+). It carries out the reaction 32-oxolanosterol + reduced [NADPH--hemoprotein reductase] + O2 = 4,4-dimethyl-5alpha-cholesta-8,14,24-trien-3beta-ol + formate + oxidized [NADPH--hemoprotein reductase] + H2O + 2 H(+). It functions in the pathway steroid biosynthesis; zymosterol biosynthesis; zymosterol from lanosterol: step 1/6. Its function is as follows. Sterol 14alpha-demethylase that plays a critical role in the third module of ergosterol biosynthesis pathway, being ergosterol the major sterol component in fungal membranes that participates in a variety of functions. The third module or late pathway involves the ergosterol synthesis itself through consecutive reactions that mainly occur in the endoplasmic reticulum (ER) membrane. Starting from lanosterol (lanosta-8,24-dien-3beta-ol), it catalyzes the three-step oxidative removal of the 14alpha-methyl group (C-32) of the sterol in the form of formate, and converts the sterol to 4,4-dimethyl-5alpha-cholesta-8,14,24-trien-3beta-ol, which is critical for ergosterol biosynthesis. Can demethylate substrates not intrinsic to yeast, such as eburicol (24-methylene-24,25-dihydrolanosterol) at a similar rate to lanosterol, and at a lower rate the 24,25-dihydrolanosterol (DHL) to 4,4-dimethyl-8,14-cholestadien-3beta-ol. The sequence is that of Lanosterol 14-alpha demethylase CYP51 from Saccharomyces cerevisiae (strain ATCC 204508 / S288c) (Baker's yeast).